A 125-amino-acid polypeptide reads, in one-letter code: Holo-[acyl-carrier-protein] synthase (125 aa).

Mg(2+)-binding residues include aspartate 8 and glutamate 57.

It belongs to the P-Pant transferase superfamily. AcpS family. Requires Mg(2+) as cofactor.

Its subcellular location is the cytoplasm. It carries out the reaction apo-[ACP] + CoA = holo-[ACP] + adenosine 3',5'-bisphosphate + H(+). In terms of biological role, transfers the 4'-phosphopantetheine moiety from coenzyme A to a Ser of acyl-carrier-protein. This Neisseria meningitidis serogroup C (strain 053442) protein is Holo-[acyl-carrier-protein] synthase.